A 354-amino-acid polypeptide reads, in one-letter code: Putative succinyl-diaminopimelate desuccinylase DapE (354 aa).

H69 contacts Zn(2+). Residue D71 is part of the active site. D95 serves as a coordination point for Zn(2+). The active-site Proton acceptor is the E125. Zn(2+)-binding residues include E126, E154, and H330.

The protein belongs to the peptidase M20A family. Homodimer. It depends on Zn(2+) as a cofactor. Co(2+) serves as cofactor.

It carries out the reaction N-succinyl-(2S,6S)-2,6-diaminopimelate + H2O = (2S,6S)-2,6-diaminopimelate + succinate. It participates in amino-acid biosynthesis; L-lysine biosynthesis via DAP pathway; LL-2,6-diaminopimelate from (S)-tetrahydrodipicolinate (succinylase route): step 3/3. Catalyzes the hydrolysis of N-succinyl-L,L-diaminopimelic acid (SDAP), forming succinate and LL-2,6-diaminoheptanedioate (DAP), an intermediate involved in the bacterial biosynthesis of lysine and meso-diaminopimelic acid. The chain is Putative succinyl-diaminopimelate desuccinylase DapE (dapE) from Mycobacterium tuberculosis (strain CDC 1551 / Oshkosh).